The sequence spans 528 residues: Phosphoenolpyruvate carboxykinase (ATP) (528 aa).

Substrate-binding residues include Arg-56, Tyr-192, and Lys-198. Residues Lys-198, His-217, and 233–241 (GLSGTGKTT) contribute to the ATP site. Residues Lys-198 and His-217 each contribute to the Mn(2+) site. Mn(2+) is bound at residue Asp-254. The ATP site is built by Glu-282, Arg-319, and Thr-444. Arg-319 contributes to the substrate binding site.

The protein belongs to the phosphoenolpyruvate carboxykinase (ATP) family. It depends on Mn(2+) as a cofactor.

It is found in the cytoplasm. It carries out the reaction oxaloacetate + ATP = phosphoenolpyruvate + ADP + CO2. It participates in carbohydrate biosynthesis; gluconeogenesis. Functionally, involved in the gluconeogenesis. Catalyzes the conversion of oxaloacetate (OAA) to phosphoenolpyruvate (PEP) through direct phosphoryl transfer between the nucleoside triphosphate and OAA. The protein is Phosphoenolpyruvate carboxykinase (ATP) of Bacillus cereus (strain ATCC 10987 / NRS 248).